The sequence spans 131 residues: Global transcriptional regulator Spx 2 (131 aa).

Cys10 and Cys13 are oxidised to a cystine.

Belongs to the ArsC family. Spx subfamily. In terms of assembly, interacts with the C-terminal domain of the alpha subunit of the RNAP.

The protein localises to the cytoplasm. Global transcriptional regulator that plays a key role in stress response and exerts either positive or negative regulation of genes. Acts by interacting with the C-terminal domain of the alpha subunit of the RNA polymerase (RNAP). This interaction can enhance binding of RNAP to the promoter region of target genes and stimulate their transcription, or block interaction of RNAP with activator. The protein is Global transcriptional regulator Spx 2 of Bacillus cereus (strain ATCC 14579 / DSM 31 / CCUG 7414 / JCM 2152 / NBRC 15305 / NCIMB 9373 / NCTC 2599 / NRRL B-3711).